Reading from the N-terminus, the 100-residue chain is Small ribosomal subunit protein uS14c (100 aa).

This sequence belongs to the universal ribosomal protein uS14 family. As to quaternary structure, part of the 30S ribosomal subunit.

It localises to the plastid. Its subcellular location is the chloroplast. Binds 16S rRNA, required for the assembly of 30S particles. In Cicer arietinum (Chickpea), this protein is Small ribosomal subunit protein uS14c.